The primary structure comprises 147 residues: Protein MioC (147 aa).

The Flavodoxin-like domain occupies 4–143; the sequence is ITLISGSTLG…PAEEWLGSWV (140 aa).

The protein belongs to the flavodoxin family. MioC subfamily. As to quaternary structure, homodimer. FMN is required as a cofactor.

In terms of biological role, probable electron transporter required for biotin synthase activity. The protein is Protein MioC (mioC) of Escherichia coli (strain K12).